The primary structure comprises 285 residues: UPF0603 protein At1g54780, chloroplastic (285 aa).

Disordered stretches follow at residues methionine 1–arginine 48 and glycine 228–glutamate 251. Residues histidine 22–serine 40 are compositionally biased toward polar residues. Residues lysine 238–glutamate 251 are compositionally biased toward basic and acidic residues. Residues phenylalanine 259–phenylalanine 279 traverse the membrane as a helical segment.

The protein belongs to the UPF0603 family.

The protein localises to the plastid. The protein resides in the chloroplast thylakoid membrane. This Arabidopsis thaliana (Mouse-ear cress) protein is UPF0603 protein At1g54780, chloroplastic.